Consider the following 296-residue polypeptide: Ribosomal RNA small subunit methyltransferase H (296 aa).

Residues Gly30–His32, Asp49, Phe77, Asp95, and Gln102 each bind S-adenosyl-L-methionine.

Belongs to the methyltransferase superfamily. RsmH family.

It is found in the cytoplasm. It catalyses the reaction cytidine(1402) in 16S rRNA + S-adenosyl-L-methionine = N(4)-methylcytidine(1402) in 16S rRNA + S-adenosyl-L-homocysteine + H(+). Its function is as follows. Specifically methylates the N4 position of cytidine in position 1402 (C1402) of 16S rRNA. This is Ribosomal RNA small subunit methyltransferase H from Hydrogenobaculum sp. (strain Y04AAS1).